Here is a 277-residue protein sequence, read N- to C-terminus: Ribonuclease HII (277 aa).

The region spanning lysine 20 to aspartate 250 is the RNase H type-2 domain. Residues aspartate 26, glutamate 27, and aspartate 141 each contribute to the a divalent metal cation site.

It belongs to the RNase HII family. Mn(2+) serves as cofactor. It depends on Mg(2+) as a cofactor.

The protein resides in the cytoplasm. It catalyses the reaction Endonucleolytic cleavage to 5'-phosphomonoester.. Functionally, endonuclease that specifically degrades the RNA of RNA-DNA hybrids. This is Ribonuclease HII from Methanococcus aeolicus (strain ATCC BAA-1280 / DSM 17508 / OCM 812 / Nankai-3).